We begin with the raw amino-acid sequence, 290 residues long: 4-diphosphocytidyl-2-C-methyl-D-erythritol kinase (290 aa).

K10 is an active-site residue. 96-106 (PIAAGLGGGSS) is a binding site for ATP. D138 is an active-site residue.

The protein belongs to the GHMP kinase family. IspE subfamily.

It catalyses the reaction 4-CDP-2-C-methyl-D-erythritol + ATP = 4-CDP-2-C-methyl-D-erythritol 2-phosphate + ADP + H(+). It functions in the pathway isoprenoid biosynthesis; isopentenyl diphosphate biosynthesis via DXP pathway; isopentenyl diphosphate from 1-deoxy-D-xylulose 5-phosphate: step 3/6. Its function is as follows. Catalyzes the phosphorylation of the position 2 hydroxy group of 4-diphosphocytidyl-2C-methyl-D-erythritol. The protein is 4-diphosphocytidyl-2-C-methyl-D-erythritol kinase of Caulobacter vibrioides (strain NA1000 / CB15N) (Caulobacter crescentus).